A 275-amino-acid chain; its full sequence is Membrane protein insertase YidC 1 (275 aa).

The N-terminal stretch at 1–25 is a signal peptide; it reads MRKVLRVKKNIKIARIVPLVLLLVA. Cys26 carries N-palmitoyl cysteine lipidation. Cys26 is lipidated: S-diacylglycerol cysteine. 5 helical membrane passes run 58–78, 129–149, 171–191, 198–216, and 222–240; these read SIGVGIILFTLTIRLMLMPLF, YASLLPLLIQMPVMIALFQAL, LYLLPVLAAVFTFLSTWLTNL, VMMTVMIYVMPLMIFFMGF, and VVLYWTVSNAFQVVQLLLL.

Belongs to the OXA1/ALB3/YidC family. Type 2 subfamily.

The protein localises to the cell membrane. Its function is as follows. Required for the insertion and/or proper folding and/or complex formation of integral membrane proteins into the membrane. Involved in integration of membrane proteins that insert both dependently and independently of the Sec translocase complex, as well as at least some lipoproteins. The protein is Membrane protein insertase YidC 1 of Streptococcus pyogenes serotype M6 (strain ATCC BAA-946 / MGAS10394).